The following is a 218-amino-acid chain: Small ribosomal subunit protein mS34 (218 aa).

This sequence belongs to the mitochondrion-specific ribosomal protein mS34 family. Component of the mitochondrial ribosome small subunit (28S) which comprises a 12S rRNA and about 30 distinct proteins. Widely expressed (at protein liver).

Its subcellular location is the mitochondrion. Its function is as follows. Required for mitochondrial translation, plays a role in maintaining the stability of the small ribosomal subunit and the 12S rRNA that are required for mitoribosome formation. The protein is Small ribosomal subunit protein mS34 (Mrps34) of Mus musculus (Mouse).